A 225-amino-acid chain; its full sequence is Jeltraxin (225 aa).

The N-terminal stretch at 1-19 is a signal peptide; it reads MKGLVIFFCLFYGCHVAGA. Residues 21-223 enclose the Pentraxin (PTX) domain; it reads GKTIMLFPQK…IVVLRNQFIP (203 aa). C51 and C112 are disulfide-bonded. Residues D75 and N76 each coordinate Ca(2+). N-linked (GlcNAc...) asparagine glycosylation is present at N87. 4 residues coordinate Ca(2+): E153, Q154, D155, and Q165. Residue N207 is glycosylated (N-linked (GlcNAc...) asparagine).

As to quaternary structure, homodecamer consisting of two homopentamer units. Pentraxin (or pentaxin) have a discoid arrangement of 5 non-covalently bound subunits. Ca(2+) serves as cofactor. Glycosylated. In terms of tissue distribution, oviduct. Highest expression levels were detected in the pars convoluta with lower levels detected in the pars recta. No expression was detected in the pars uterina.

It is found in the secreted. Its function is as follows. Calcium-dependent beta-galactose specific lectin. This Lepidobatrachus laevis (Budgett's frog) protein is Jeltraxin.